A 323-amino-acid chain; its full sequence is L-lactate dehydrogenase (323 aa).

The NAD(+) site is built by Val11, Asp32, and Tyr63. Residues Gln80 and Arg86 each coordinate substrate. Residues Ser99, 116-118 (VSN), and Ser141 contribute to the NAD(+) site. 118–121 (NPVD) serves as a coordination point for substrate. 146–149 (DTAR) serves as a coordination point for substrate. Residues Arg151 and His166 each coordinate beta-D-fructose 1,6-bisphosphate. His173 serves as the catalytic Proton acceptor. Tyr221 is subject to Phosphotyrosine. Thr230 contributes to the substrate binding site.

This sequence belongs to the LDH/MDH superfamily. LDH family. Homotetramer.

It is found in the cytoplasm. The enzyme catalyses (S)-lactate + NAD(+) = pyruvate + NADH + H(+). It functions in the pathway fermentation; pyruvate fermentation to lactate; (S)-lactate from pyruvate: step 1/1. Its activity is regulated as follows. Allosterically activated by fructose 1,6-bisphosphate (FBP). Its function is as follows. Catalyzes the conversion of lactate to pyruvate. The protein is L-lactate dehydrogenase of Kosmotoga olearia (strain ATCC BAA-1733 / DSM 21960 / TBF 19.5.1).